A 186-amino-acid polypeptide reads, in one-letter code: Peptidyl-tRNA hydrolase (186 aa).

H19 acts as the Proton acceptor in catalysis. Positions 64, 66, and 112 each coordinate tRNA.

This sequence belongs to the PTH family. As to quaternary structure, monomer.

The protein localises to the cytoplasm. It catalyses the reaction an N-acyl-L-alpha-aminoacyl-tRNA + H2O = an N-acyl-L-amino acid + a tRNA + H(+). Its function is as follows. Hydrolyzes ribosome-free peptidyl-tRNAs (with 1 or more amino acids incorporated), which drop off the ribosome during protein synthesis, or as a result of ribosome stalling. Functionally, catalyzes the release of premature peptidyl moieties from peptidyl-tRNA molecules trapped in stalled 50S ribosomal subunits, and thus maintains levels of free tRNAs and 50S ribosomes. This Pelagibacter ubique (strain HTCC1062) protein is Peptidyl-tRNA hydrolase.